A 357-amino-acid polypeptide reads, in one-letter code: SPbeta prophage-derived pesticidal crystal protein-like YokG (357 aa).

The protein belongs to the cry6A endotoxin family.

The chain is SPbeta prophage-derived pesticidal crystal protein-like YokG (yokG) from Bacillus subtilis (strain 168).